Consider the following 60-residue polypeptide: DNA gyrase inhibitor YacG (60 aa).

Residues cysteine 15, cysteine 18, cysteine 30, and cysteine 34 each contribute to the Zn(2+) site.

This sequence belongs to the DNA gyrase inhibitor YacG family. Interacts with GyrB. Zn(2+) is required as a cofactor.

Its function is as follows. Inhibits all the catalytic activities of DNA gyrase by preventing its interaction with DNA. Acts by binding directly to the C-terminal domain of GyrB, which probably disrupts DNA binding by the gyrase. In Nitrobacter hamburgensis (strain DSM 10229 / NCIMB 13809 / X14), this protein is DNA gyrase inhibitor YacG.